The chain runs to 353 residues: Phospho-N-acetylmuramoyl-pentapeptide-transferase (353 aa).

A run of 10 helical transmembrane segments spans residues Y16–M36, A64–L84, L88–I108, L130–S150, F160–S180, S198–A218, I228–W248, V256–V276, I281–V301, and K330–L350.

This sequence belongs to the glycosyltransferase 4 family. MraY subfamily. Requires Mg(2+) as cofactor.

The protein localises to the cell inner membrane. The catalysed reaction is UDP-N-acetyl-alpha-D-muramoyl-L-alanyl-gamma-D-glutamyl-meso-2,6-diaminopimeloyl-D-alanyl-D-alanine + di-trans,octa-cis-undecaprenyl phosphate = di-trans,octa-cis-undecaprenyl diphospho-N-acetyl-alpha-D-muramoyl-L-alanyl-D-glutamyl-meso-2,6-diaminopimeloyl-D-alanyl-D-alanine + UMP. It participates in cell wall biogenesis; peptidoglycan biosynthesis. Functionally, catalyzes the initial step of the lipid cycle reactions in the biosynthesis of the cell wall peptidoglycan: transfers peptidoglycan precursor phospho-MurNAc-pentapeptide from UDP-MurNAc-pentapeptide onto the lipid carrier undecaprenyl phosphate, yielding undecaprenyl-pyrophosphoryl-MurNAc-pentapeptide, known as lipid I. The protein is Phospho-N-acetylmuramoyl-pentapeptide-transferase of Aliarcobacter butzleri (strain RM4018) (Arcobacter butzleri).